Consider the following 493-residue polypeptide: Keratin, type II cuticular Hb3 (493 aa).

A head region spans residues 1 to 111 (MTCGFNSIGC…PNAQCVKQEE (111 aa)). An IF rod domain is found at 111 to 422 (EKEQIKSLNS…RLLEGEEQRL (312 aa)). A coil 1A region spans residues 112 to 146 (KEQIKSLNSRFAAFIDKVRFLEQQNKLLETKLQFY). The linker 1 stretch occupies residues 147 to 156 (QNRECCQSNL). Residues 157–257 (EPLFAGYIET…YEEEIRILQS (101 aa)) are coil 1B. Lys217 is covalently cross-linked (Glycyl lysine isopeptide (Lys-Gly) (interchain with G-Cter in SUMO1)). Residues 258 to 274 (HISDTSVVVKLDNSRDL) form a linker 12 region. The segment at 275 to 418 (NMDCIVAEIK…ATYRRLLEGE (144 aa)) is coil 2. The tail stretch occupies residues 419-493 (EQRLCEGVEA…GGGSCGQGRH (75 aa)).

This sequence belongs to the intermediate filament family. In terms of assembly, heterotetramer of two type I and two type II keratins. Synthesis begins in the cortex 10-15 cell layers above the apex of the dermal papilla and ends abruptly in the middle of the cortex.

The polypeptide is Keratin, type II cuticular Hb3 (KRT83) (Homo sapiens (Human)).